The following is a 199-amino-acid chain: Type-4 uracil-DNA glycosylase (199 aa).

[4Fe-4S] cluster is bound by residues cysteine 14 and cysteine 17. Uracil-binding positions include 41 to 43, phenylalanine 55, and asparagine 81; that span reads GEA. Residues 77–114 form a pseudo-FCL region; sequence VYITNVLKCRPPNNRDPTPEEVEKCGDYLVRQLEAIRP. Residues cysteine 85 and cysteine 101 each contribute to the [4Fe-4S] cluster site. Histidine 163 provides a ligand contact to uracil.

The protein belongs to the uracil-DNA glycosylase (UDG) superfamily. Type 4 (UDGa) family.

It carries out the reaction Hydrolyzes single-stranded DNA or mismatched double-stranded DNA and polynucleotides, releasing free uracil.. With respect to regulation, product-inhibited by both uracil and apurinic/apyrimidinic sites. Functionally, removes uracil bases that are present in DNA as a result of either deamination of cytosine or misincorporation of dUMP instead of dTMP. Can remove uracil from double-stranded DNA containing either a U/G or U/A base pair as well as from single-stranded DNA. The chain is Type-4 uracil-DNA glycosylase from Archaeoglobus fulgidus (strain ATCC 49558 / DSM 4304 / JCM 9628 / NBRC 100126 / VC-16).